A 518-amino-acid chain; its full sequence is UPF0288 protein Mbar_A0706 (518 aa).

The protein belongs to the UPF0288 family.

The protein is UPF0288 protein Mbar_A0706 of Methanosarcina barkeri (strain Fusaro / DSM 804).